Here is a 293-residue protein sequence, read N- to C-terminus: Glycine--tRNA ligase alpha subunit (293 aa).

The protein belongs to the class-II aminoacyl-tRNA synthetase family. In terms of assembly, tetramer of two alpha and two beta subunits.

Its subcellular location is the cytoplasm. The enzyme catalyses tRNA(Gly) + glycine + ATP = glycyl-tRNA(Gly) + AMP + diphosphate. The polypeptide is Glycine--tRNA ligase alpha subunit (Aliarcobacter butzleri (strain RM4018) (Arcobacter butzleri)).